Here is a 504-residue protein sequence, read N- to C-terminus: Maturase K (504 aa).

The protein belongs to the intron maturase 2 family. MatK subfamily.

It localises to the plastid. Its subcellular location is the chloroplast. In terms of biological role, usually encoded in the trnK tRNA gene intron. Probably assists in splicing its own and other chloroplast group II introns. In Prionotes cerinthoides (Climbing heath), this protein is Maturase K.